A 703-amino-acid chain; its full sequence is Elongation factor G (703 aa).

The region spanning 9 to 292 is the tr-type G domain; the sequence is ERTRNIGIMA…AVVDYLPGPL (284 aa). GTP-binding positions include 18-25, 91-95, and 145-148; these read AHIDAGKT, DTPGH, and NKMD.

The protein belongs to the TRAFAC class translation factor GTPase superfamily. Classic translation factor GTPase family. EF-G/EF-2 subfamily.

It is found in the cytoplasm. Catalyzes the GTP-dependent ribosomal translocation step during translation elongation. During this step, the ribosome changes from the pre-translocational (PRE) to the post-translocational (POST) state as the newly formed A-site-bound peptidyl-tRNA and P-site-bound deacylated tRNA move to the P and E sites, respectively. Catalyzes the coordinated movement of the two tRNA molecules, the mRNA and conformational changes in the ribosome. This chain is Elongation factor G, found in Leuconostoc citreum (strain KM20).